Here is a 211-residue protein sequence, read N- to C-terminus: tRNA (guanosine(18)-2'-O)-methyltransferase (211 aa).

3 residues coordinate S-adenosyl-L-methionine: Thr103, Ile146, and Leu155.

It belongs to the class IV-like SAM-binding methyltransferase superfamily. RNA methyltransferase TrmH family. As to quaternary structure, homodimer.

It carries out the reaction guanosine(18) in tRNA + S-adenosyl-L-methionine = 2'-O-methylguanosine(18) in tRNA + S-adenosyl-L-homocysteine + H(+). In terms of biological role, catalyzes the 2'-O methylation of guanosine at position 18 in tRNA. Type II methylase, which methylates only a subset of tRNA species. This is tRNA (guanosine(18)-2'-O)-methyltransferase from Aquifex aeolicus (strain VF5).